Here is a 372-residue protein sequence, read N- to C-terminus: Glutamine synthetase (372 aa).

A GS beta-grasp domain is found at 24 to 103; it reads VIAEYVWVDG…VLAECFNSDG (80 aa). The 263-residue stretch at 110 to 372 folds into the GS catalytic domain; the sequence is HRHEANKLFQ…KEYERETNEQ (263 aa).

Belongs to the glutamine synthetase family. Homooctamer.

The protein resides in the cytoplasm. It carries out the reaction L-glutamate + NH4(+) + ATP = L-glutamine + ADP + phosphate + H(+). The chain is Glutamine synthetase (GLN1) from Candida glabrata (strain ATCC 2001 / BCRC 20586 / JCM 3761 / NBRC 0622 / NRRL Y-65 / CBS 138) (Yeast).